Reading from the N-terminus, the 75-residue chain is Alpha-elapitoxin-Bc2c (75 aa).

An N-terminal signal peptide occupies residues 1 to 2 (YT). Intrachain disulfides connect cysteine 5–cysteine 24, cysteine 17–cysteine 45, cysteine 30–cysteine 34, cysteine 49–cysteine 60, and cysteine 61–cysteine 66.

The protein belongs to the three-finger toxin family. Long-chain subfamily. Type II alpha-neurotoxin sub-subfamily. In terms of assembly, monomer in solution, homodimer in crystal state. In terms of tissue distribution, expressed by the venom gland.

It localises to the secreted. Binds to muscular and neuronal nicotinic acetylcholine receptor (nAChR) and inhibits acetylcholine from binding to the receptor, thereby impairing neuromuscular and neuronal transmission. Blocks muscle type nAChR. Also binds with high affinity to alpha-7/CHRNA7 nAChRs. In addition, shows a weak inhibition of neuronal alpha-3-beta-2/CHRNA3-CHRNB2 nAChR. Selectively binds to alpha-1-delta subunit interface of the mouse muscle nicotinic acetylcholine receptor, with a 10-fold higher affinity for the adult than for the fetal receptors. In vivo, when intraperitoneally injected into mice, causes flaccid paralysis and respiratory distress, followed by death within 2-4 hours. The chain is Alpha-elapitoxin-Bc2c from Bungarus candidus (Malayan krait).